Consider the following 554-residue polypeptide: Dihydroxy-acid dehydratase (554 aa).

[2Fe-2S] cluster is bound at residue cysteine 48. Aspartate 80 is a Mg(2+) binding site. [2Fe-2S] cluster is bound at residue cysteine 121. Mg(2+)-binding residues include aspartate 122 and lysine 123. Lysine 123 carries the N6-carboxylysine modification. Cysteine 193 is a binding site for [2Fe-2S] cluster. Glutamate 444 provides a ligand contact to Mg(2+). Serine 470 serves as the catalytic Proton acceptor.

This sequence belongs to the IlvD/Edd family. Homodimer. Requires [2Fe-2S] cluster as cofactor. It depends on Mg(2+) as a cofactor.

It carries out the reaction (2R)-2,3-dihydroxy-3-methylbutanoate = 3-methyl-2-oxobutanoate + H2O. It catalyses the reaction (2R,3R)-2,3-dihydroxy-3-methylpentanoate = (S)-3-methyl-2-oxopentanoate + H2O. It functions in the pathway amino-acid biosynthesis; L-isoleucine biosynthesis; L-isoleucine from 2-oxobutanoate: step 3/4. It participates in amino-acid biosynthesis; L-valine biosynthesis; L-valine from pyruvate: step 3/4. Functionally, functions in the biosynthesis of branched-chain amino acids. Catalyzes the dehydration of (2R,3R)-2,3-dihydroxy-3-methylpentanoate (2,3-dihydroxy-3-methylvalerate) into 2-oxo-3-methylpentanoate (2-oxo-3-methylvalerate) and of (2R)-2,3-dihydroxy-3-methylbutanoate (2,3-dihydroxyisovalerate) into 2-oxo-3-methylbutanoate (2-oxoisovalerate), the penultimate precursor to L-isoleucine and L-valine, respectively. The protein is Dihydroxy-acid dehydratase of Tremblaya princeps.